The primary structure comprises 32 residues: Hyaluronidase-Pk1a (32 aa).

A glycan (N-linked (GlcNAc...) asparagine) is linked at N23.

Belongs to the glycosyl hydrolase 56 family. As to expression, expressed by the venom gland.

The protein resides in the secreted. It catalyses the reaction Random hydrolysis of (1-&gt;4)-linkages between N-acetyl-beta-D-glucosamine and D-glucuronate residues in hyaluronate.. Functionally, hydrolyzes high molecular weight hyaluronic acid to produce small oligosaccharides. The chain is Hyaluronidase-Pk1a from Phoneutria keyserlingi (Brazilian wandering spider).